An 82-amino-acid chain; its full sequence is Small ribosomal subunit protein bS16 (82 aa).

It belongs to the bacterial ribosomal protein bS16 family.

This Klebsiella pneumoniae (strain 342) protein is Small ribosomal subunit protein bS16.